Reading from the N-terminus, the 191-residue chain is RNA pyrophosphohydrolase (191 aa).

One can recognise a Nudix hydrolase domain in the interval 6–149 (GYRLNVGIIL…KREVYRQALS (144 aa)). Residues 38–59 (GGIKVDEDPDAAMFRELYEEVG) carry the Nudix box motif. The segment at 162-191 (GAQAVSDAGGTATRQIPVATEPSGPSSSQR) is disordered.

This sequence belongs to the Nudix hydrolase family. RppH subfamily. A divalent metal cation serves as cofactor.

Its function is as follows. Accelerates the degradation of transcripts by removing pyrophosphate from the 5'-end of triphosphorylated RNA, leading to a more labile monophosphorylated state that can stimulate subsequent ribonuclease cleavage. The sequence is that of RNA pyrophosphohydrolase from Methylococcus capsulatus (strain ATCC 33009 / NCIMB 11132 / Bath).